Here is a 302-residue protein sequence, read N- to C-terminus: Probable lipid kinase YegS-like (302 aa).

A DAGKc domain is found at 1–129 (MDKDKVLLVL…IDLGEVNGKL (129 aa)). ATP is bound by residues T39, 65–71 (GDGTLRE), and T92. Mg(2+)-binding residues include R210, D213, and L215. The active-site Proton acceptor is the E268.

It belongs to the diacylglycerol/lipid kinase family. YegS lipid kinase subfamily. The cofactor is Mg(2+). Ca(2+) is required as a cofactor.

It is found in the cytoplasm. Functionally, probably phosphorylates lipids; the in vivo substrate is unknown. The sequence is that of Probable lipid kinase YegS-like from Pseudomonas aeruginosa (strain ATCC 15692 / DSM 22644 / CIP 104116 / JCM 14847 / LMG 12228 / 1C / PRS 101 / PAO1).